We begin with the raw amino-acid sequence, 125 residues long: uncharacterized protein (125 aa).

Belongs to the asfivirus B125R family.

This is an uncharacterized protein from African swine fever virus (isolate Tick/Malawi/Lil 20-1/1983) (ASFV).